The following is a 359-amino-acid chain: Stearoyl-CoA desaturase (359 aa).

Residues 1-72 (MPAHLLQEEI…EGPRPKLEYV (72 aa)) are Cytoplasmic-facing. Residues 73 to 93 (WRNIILMSLLHLGALYGIILI) traverse the membrane as a helical segment. Asn75 serves as a coordination point for substrate. The Lumenal segment spans residues 94 to 97 (PTCK). A helical transmembrane segment spans residues 98–118 (IYTLLWAFAYYLLSAVGVTAG). Topologically, residues 119–217 (AHRLWSHRTY…EKLVMFQRRY (99 aa)) are cytoplasmic. Fe cation contacts are provided by His120 and His125. The short motif at 120 to 125 (HRLWSH) is the Histidine box-1 element. Substrate-binding residues include Asn148, Arg155, and Asp156. His157, His160, and His161 together coordinate Fe cation. The Histidine box-2 signature appears at 157-161 (HRAHH). Residues Arg188 and Lys189 each contribute to the substrate site. The residue at position 203 (Ser203) is a Phosphoserine. A helical membrane pass occupies residues 218-237 (YKPGILLMCFILPTIVPWYC). The Lumenal segment spans residues 238–241 (WGEA). The chain crosses the membrane as a helical span at residues 242–263 (FPQSLFVATFLRYAIVLNATWL). Trp262 is a binding site for substrate. Residues 264-359 (VNSAAHLYGY…RTGDESYKSG (96 aa)) lie on the Cytoplasmic side of the membrane. Residues His269, His298, His301, and His302 each coordinate Fe cation. Residues 298-302 (HNYHH) carry the Histidine box-3 motif.

It belongs to the fatty acid desaturase type 1 family. Fe(2+) is required as a cofactor.

The protein resides in the endoplasmic reticulum membrane. The catalysed reaction is octadecanoyl-CoA + 2 Fe(II)-[cytochrome b5] + O2 + 2 H(+) = (9Z)-octadecenoyl-CoA + 2 Fe(III)-[cytochrome b5] + 2 H2O. It carries out the reaction hexadecanoyl-CoA + 2 Fe(II)-[cytochrome b5] + O2 + 2 H(+) = (9Z)-hexadecenoyl-CoA + 2 Fe(III)-[cytochrome b5] + 2 H2O. Functionally, stearoyl-CoA desaturase that utilizes O(2) and electrons from reduced cytochrome b5 to introduce the first double bond into saturated fatty acyl-CoA substrates. Catalyzes the insertion of a cis double bond at the delta-9 position into fatty acyl-CoA substrates including palmitoyl-CoA and stearoyl-CoA. Gives rise to a mixture of 16:1 and 18:1 unsaturated fatty acids. Plays an important role in lipid biosynthesis. Plays an important role in regulating the expression of genes that are involved in lipogenesis and in regulating mitochondrial fatty acid oxidation. Plays an important role in body energy homeostasis. Contributes to the biosynthesis of membrane phospholipids, cholesterol esters and triglycerides. This chain is Stearoyl-CoA desaturase (SCD), found in Sus scrofa (Pig).